Consider the following 380-residue polypeptide: NADPH oxidoreductase (380 aa).

In terms of domain architecture, FAD-binding FR-type spans 58-164; the sequence is ARELRGRILG…AAPQGNFVLP (107 aa). Positions 299–380 constitute a 2Fe-2S ferredoxin-type domain; it reads GTVTFARSGK…AASGDCVLDI (82 aa). [2Fe-2S] cluster-binding residues include Cys-333, Cys-338, Cys-341, and Cys-368.

As to quaternary structure, interacts with DesA3 to form a functional acyl-CoA desaturase complex. It depends on [2Fe-2S] cluster as a cofactor. The cofactor is FAD.

It localises to the cell membrane. It functions in the pathway lipid metabolism; fatty acid metabolism. Its function is as follows. Is likely involved in the aerobic desaturation system responsible for the synthesis of oleic acid from stearoyl-CoA; oleic acid is a precursor of mycobacterial membrane phospholipids and triglycerides. Is the electron transfer partner for the stearoyl-CoA 9-desaturase DesA3. Catalyzes electron transfer reaction between NADPH and the diiron center of DesA3. Cannot use NADH. In Mycobacterium tuberculosis (strain ATCC 25618 / H37Rv), this protein is NADPH oxidoreductase.